Here is a 251-residue protein sequence, read N- to C-terminus: MGRGRVELKRIENKINRQVTFAKRRNGLLKKAYELSVLCDAEVALIIFSNRGKLYEFCSSSSMLRTLERYQKCNYGAPEPNVPSREALAVELSSQQEYLKLKERYDALQRTQRNLLGEDLGPLSTKELESLERQLDSSLKQIRALRTQFMLDQLNDLQSKERMLTETNKTLRLRLADGYQMPLQLNPNQEEVDHYGRHHHQQQQHSQAFFQPLECEPILQIGYQGQQDGMGAGPSVNNYMLGWLPYDTNSI.

An MADS-box domain is found at 3-57 (RGRVELKRIENKINRQVTFAKRRNGLLKKAYELSVLCDAEVALIIFSNRGKLYEF). Positions 91-181 (ELSSQQEYLK…RLRLADGYQM (91 aa)) constitute a K-box domain. The stretch at 94–177 (SQQEYLKLKE…NKTLRLRLAD (84 aa)) forms a coiled coil.

In terms of assembly, forms homodimers. Heterodimer with AP1 or AG capable of binding to CArG-box sequences. Binds AP3/PI to form a ternary complex. Interacts with AGL16. Interacts with TT16/AGL32.

It is found in the nucleus. Probable transcription factor active in inflorescence development and floral organogenesis. Functions with SEPALLATA1/AGL2 and SEPALLATA2/AGL4 to ensure proper development of petals, stamens and carpels and to prevent the indeterminate growth of the flower meristem. Interacts with APETALA1, AGAMOUS or APETALA3/PISTILLATA to form complexes, that could be involved in genes regulation during floral meristem development. Binds specifically to the CArG box DNA sequence 5'-CC (A/T)6 GG-3'. The chain is Developmental protein SEPALLATA 3 (SEP3) from Arabidopsis thaliana (Mouse-ear cress).